We begin with the raw amino-acid sequence, 262 residues long: Ferric siderophore reductase (262 aa).

[2Fe-2S] cluster-binding residues include C244, C245, C256, and C259.

In terms of assembly, monomer. It depends on [2Fe-2S] cluster as a cofactor.

Its subcellular location is the cytoplasm. The protein resides in the cell inner membrane. With respect to regulation, displays pH dependent redox properties. SufD is necessary for the stability of FhuF. Its function is as follows. Siderophore-iron reductase which is involved in iron removal from the hydroxamate-type siderophores coprogen, ferrichrome and ferrioxamine B after their transport into the cell. Binds both the iron-loaded and the apo forms of ferrichrome. The chain is Ferric siderophore reductase (fhuF) from Escherichia coli (strain K12).